Reading from the N-terminus, the 699-residue chain is Condensin complex subunit 2 (699 aa).

Disordered regions lie at residues 1 to 35 and 176 to 203; these read MSTS…SAAA and ESQA…KRRK.

It belongs to the CND2 (condensin subunit 2) family. As to quaternary structure, component of the condensin complex, which contains the XCAP-E/SMC2 and XCAP-C/SMC4 heterodimer, and three non SMC subunits that probably regulate the complex: XCAP-H/NCAPH, XCAP-D2/NCAPD2 and XCAP-G/NCAPG. Phosphorylated by CDK1. Its phosphorylation, as well as that of XCAP-D2 and XCAP-G subunits, activates the condensin complex and is required for chromosome condensation.

It localises to the nucleus. The protein resides in the cytoplasm. The protein localises to the chromosome. Functionally, regulatory subunit of the condensin complex, a complex required for conversion of interphase chromatin into mitotic-like condense chromosomes. The condensin complex probably introduces positive supercoils into relaxed DNA in the presence of type I topoisomerases and converts nicked DNA into positive knotted forms in the presence of type II topoisomerase. This chain is Condensin complex subunit 2 (ncaph), found in Xenopus laevis (African clawed frog).